Reading from the N-terminus, the 237-residue chain is Aliphatic sulfonates import ATP-binding protein SsuB 1 (237 aa).

The ABC transporter domain maps to Leu-5–Ala-221. ATP is bound at residue Gly-38–Ser-45.

It belongs to the ABC transporter superfamily. Aliphatic sulfonates importer (TC 3.A.1.17.2) family. As to quaternary structure, the complex is composed of two ATP-binding proteins (SsuB), two transmembrane proteins (SsuC) and a solute-binding protein (SsuA).

It localises to the cell inner membrane. The enzyme catalyses ATP + H2O + aliphatic sulfonate-[sulfonate-binding protein]Side 1 = ADP + phosphate + aliphatic sulfonateSide 2 + [sulfonate-binding protein]Side 1.. Its function is as follows. Part of the ABC transporter complex SsuABC involved in aliphatic sulfonates import. Responsible for energy coupling to the transport system. The sequence is that of Aliphatic sulfonates import ATP-binding protein SsuB 1 from Pseudomonas savastanoi pv. phaseolicola (strain 1448A / Race 6) (Pseudomonas syringae pv. phaseolicola (strain 1448A / Race 6)).